We begin with the raw amino-acid sequence, 543 residues long: CTP synthase (543 aa).

Residues 1–267 (MKQTKYIFVT…LNPIAEILDL (267 aa)) form an amidoligase domain region. S15 is a binding site for CTP. UTP is bound at residue S15. ATP contacts are provided by residues 16 to 21 (SLGKGI) and D73. Mg(2+) contacts are provided by D73 and E141. Residues 148 to 150 (DIE), 188 to 193 (KTKPTQ), and K224 contribute to the CTP site. Residues 188–193 (KTKPTQ) and K224 each bind UTP. One can recognise a Glutamine amidotransferase type-1 domain in the interval 292–543 (KIAFVGKYVD…IKAAINYEDN (252 aa)). Residue G354 participates in L-glutamine binding. Catalysis depends on C381, which acts as the Nucleophile; for glutamine hydrolysis. Residues 382-385 (LGMQ), E405, and R473 each bind L-glutamine. Catalysis depends on residues H516 and E518.

It belongs to the CTP synthase family. In terms of assembly, homotetramer.

The enzyme catalyses UTP + L-glutamine + ATP + H2O = CTP + L-glutamate + ADP + phosphate + 2 H(+). It carries out the reaction L-glutamine + H2O = L-glutamate + NH4(+). It catalyses the reaction UTP + NH4(+) + ATP = CTP + ADP + phosphate + 2 H(+). It functions in the pathway pyrimidine metabolism; CTP biosynthesis via de novo pathway; CTP from UDP: step 2/2. Its activity is regulated as follows. Allosterically activated by GTP, when glutamine is the substrate; GTP has no effect on the reaction when ammonia is the substrate. The allosteric effector GTP functions by stabilizing the protein conformation that binds the tetrahedral intermediate(s) formed during glutamine hydrolysis. Inhibited by the product CTP, via allosteric rather than competitive inhibition. Functionally, catalyzes the ATP-dependent amination of UTP to CTP with either L-glutamine or ammonia as the source of nitrogen. Regulates intracellular CTP levels through interactions with the four ribonucleotide triphosphates. In Campylobacter jejuni subsp. doylei (strain ATCC BAA-1458 / RM4099 / 269.97), this protein is CTP synthase.